The following is a 197-amino-acid chain: Lactoylglutathione lyase-like protein terB (197 aa).

The N-terminal stretch at 1–19 is a signal peptide; that stretch reads MARFAVLQLLLPLAAGLTG. N-linked (GlcNAc...) asparagine glycans are attached at residues Asn-82, Asn-99, and Asn-140.

The protein belongs to the glyoxalase I family.

Its function is as follows. Lactoylglutathione lyase-like protein; part of the gene cluster that mediates the biosynthesis of terrein, a fungal metabolite with ecological, antimicrobial, antiproliferative, and antioxidative activities. The first step in the pathway is performed by the polyketide synthase terA that produces 4-hydroxy-6-methylpyranon (4-HMP), orsellinic acid (OA), and 2,3-dehydro-6-hydroxymellein (2,3-dehydro-6-HM) by condensing acetyl-CoA with two, three, or four malonyl-CoA units, respectively. 4-HMP and OA are not pathway intermediates, but are rather shunt or side products. 2,3-dehydro-6-HM is further converted to 6-hydroxymellein (6-HM) by the 6-hydroxymellein synthase terB. The monooxygenases terC and terD, the multicopper oxidase terE and the Kelch-like protein terF are then involved in the transformation of 6-HM to terrein. Even if they are co-regulated with the other terrein cluster genes, terH and terI seem to be dispensable for terrein production; whereas one or both of the 2 transporters terG and terJ are probably required for efficient secretion of metabolites. The chain is Lactoylglutathione lyase-like protein terB from Aspergillus terreus (strain NIH 2624 / FGSC A1156).